Here is a 394-residue protein sequence, read N- to C-terminus: Elongation factor Tu (394 aa).

A tr-type G domain is found at 10-204 (KPHVNVGTIG…ALDSYIPEPE (195 aa)). The tract at residues 19–26 (GHVDHGKT) is G1. 19–26 (GHVDHGKT) contributes to the GTP binding site. Thr-26 is a Mg(2+) binding site. Positions 60–64 (GITIN) are G2. A G3 region spans residues 81–84 (DCPG). Residues 81-85 (DCPGH) and 136-139 (NKCD) contribute to the GTP site. The G4 stretch occupies residues 136–139 (NKCD). Residues 174–176 (SAL) are G5.

Belongs to the TRAFAC class translation factor GTPase superfamily. Classic translation factor GTPase family. EF-Tu/EF-1A subfamily. In terms of assembly, monomer.

Its subcellular location is the cytoplasm. It catalyses the reaction GTP + H2O = GDP + phosphate + H(+). In terms of biological role, GTP hydrolase that promotes the GTP-dependent binding of aminoacyl-tRNA to the A-site of ribosomes during protein biosynthesis. The polypeptide is Elongation factor Tu (Shewanella amazonensis (strain ATCC BAA-1098 / SB2B)).